A 327-amino-acid polypeptide reads, in one-letter code: Malate dehydrogenase (327 aa).

An NAD(+)-binding site is contributed by 11–17 (GAAGQIS). Positions 92 and 98 each coordinate substrate. NAD(+)-binding positions include Asn-105, Gln-112, and 129–131 (VGN). Substrate-binding residues include Asn-131 and Arg-162. Residue His-187 is the Proton acceptor of the active site.

Belongs to the LDH/MDH superfamily. MDH type 2 family.

It catalyses the reaction (S)-malate + NAD(+) = oxaloacetate + NADH + H(+). Its function is as follows. Catalyzes the reversible oxidation of malate to oxaloacetate. This Teredinibacter turnerae (strain ATCC 39867 / T7901) protein is Malate dehydrogenase.